The sequence spans 60 residues: Chromatin protein Cren7 (60 aa).

The protein belongs to the Cren7 family. Monomer. Methylated at multiple sites, to varying extents.

The protein resides in the chromosome. The protein localises to the cytoplasm. Functionally, a chromatin protein, binds double-stranded DNA without sequence specificity. Constrains negative DNA supercoils. The sequence is that of Chromatin protein Cren7 from Saccharolobus islandicus (strain M.16.4 / Kamchatka #3) (Sulfolobus islandicus).